Consider the following 1582-residue polypeptide: Dynein axonemal assembly factor 1 homolog (1582 aa).

6 LRR repeats span residues 38 to 60, 61 to 82, 83 to 104, 105 to 126, 129 to 150, and 154 to 175; these read RLNDVLYLHFQGYQCIENLDEYT, ELKSLWLESNAISEIQNLTKLT, KLKCLYLQNNLITKMENLEFNR, ELDTLNLSQNHIRKIENIGTDI, VLNTLNITSNYLTDSASLAALV, and TLSVLDLSNNRIDDILIVKIFE. Residues 189–227 enclose the LRRCT domain; the sequence is PVVSRLPQYRKTLILACKELTYLDSRPVFPRDRACAEAW. Disordered regions lie at residues 245 to 420, 560 to 587, 859 to 878, 913 to 942, 1073 to 1092, 1101 to 1137, 1150 to 1218, 1305 to 1345, 1358 to 1438, 1484 to 1517, and 1529 to 1548; these read AERR…SEMD, SSDVQEQAKDPSESDEEPTEEEMEVKSQ, FSKDTPESLDAQLAKDEDRR, DTGELEELPPPPELISDSESEKEVEEDDDA, SSNEDLEAKHKSNDDPLVER, MQRMKEHEERARELQEQLEKEKEEENSGPIKLSMGEG, TEII…QAEG, KDNE…TAKD, LDPE…PYQT, EDSKIGDGPTEKFLDQKAQDNTENTDERPENPKN, and PSESLEDTEATETPEVSTEQ. Residues 313 to 327 show a composition bias toward low complexity; sequence ESQASEHSTTSSTSA. The segment covering 339–392 has biased composition (basic and acidic residues); that stretch reads HIAERISNRRVKPLEGRPKVLYDEAASGDEKAVTTTDSKKDSNAEDLPELKDIT. A compositionally biased stretch (polar residues) spans 409–420; sequence TLLQSDSGSEMD. Residues 572–582 are compositionally biased toward acidic residues; the sequence is ESDEEPTEEEM. Over residues 928–942 the composition is skewed to acidic residues; that stretch reads SDSESEKEVEEDDDA. 2 stretches are compositionally biased toward basic and acidic residues: residues 1078–1092 and 1103–1125; these read LEAKHKSNDDPLVER and RMKEHEERARELQEQLEKEKEEE. A compositionally biased stretch (low complexity) spans 1166 to 1178; the sequence is EGGAQQEEGGAQS. Basic and acidic residues-rich tracts occupy residues 1321-1335, 1398-1427, and 1484-1514; these read PKEEHIPEVKSETET, SALKETTEIGDSEKQENKTQDETLDPKDTE, and EDSKIGDGPTEKFLDQKAQDNTENTDERPEN. Positions 1529-1540 are enriched in acidic residues; the sequence is PSESLEDTEATE.

The protein belongs to the DNAAF1 family.

Its subcellular location is the cell projection. It localises to the cilium. Its function is as follows. Cilium-specific protein required for cilia structures. The protein is Dynein axonemal assembly factor 1 homolog (dtr) of Drosophila pseudoobscura pseudoobscura (Fruit fly).